The primary structure comprises 1019 residues: Collagen alpha-2(VI) chain (1019 aa).

A signal peptide spans 1-20; sequence MLQGTCSVLLLWGILGAIQA. The segment at 21–256 is nonhelical region; it reads QQQEVISPDT…YKVSCLEIPG (236 aa). Residues 46-234 enclose the VWFA 1 domain; the sequence is HVYFVLDTSE…EIDQDTINRI (189 aa). Asn140 carries an N-linked (GlcNAc...) asparagine glycan. A disordered region spans residues 257–588; sequence PSGPKGYRGQ…GEPGPPGDPG (332 aa). Positions 257–590 are triple-helical region; the sequence is PSGPKGYRGQ…PGPPGDPGLT (334 aa). Residues 287–305 are compositionally biased toward low complexity; that stretch reads DPGIEGPIGFPGPKGVPGF. Over residues 306 to 318 the composition is skewed to basic and acidic residues; sequence KGEKGEFGADGRK. Asn327 carries an N-linked (GlcNAc...) asparagine glycan. Basic and acidic residues-rich tracts occupy residues 365–377 and 419–429; these read ERGDQGGKGDPGR and PKGEPGRRGDP. 5 short sequence motifs (cell attachment site) span residues 366–368, 426–428, 489–491, 498–500, and 539–541; these read RGD. Over residues 524-557 the composition is skewed to basic and acidic residues; it reads PGEKGEPGPRGPEGGRGDFGLKGEPGRKGEKGEP. Positions 559–569 are enriched in pro residues; that stretch reads DPGPPGEPGPR. The interval 591–1019 is nonhelical region; sequence ECDVMTYVRE…FFDRFIRWIC (429 aa). 2 consecutive VWFA domains span residues 615–805 and 833–1014; these read DVVF…EDVL and DIVF…FDRF. The N-linked (GlcNAc...) asparagine glycan is linked to Asn630. Thr701 bears the Phosphothreonine mark. Ser705 bears the Phosphoserine mark. 3 N-linked (GlcNAc...) asparagine glycosylation sites follow: Asn785, Asn897, and Asn954.

It belongs to the type VI collagen family. Trimers composed of three different chains: alpha-1(VI), alpha-2(VI), and alpha-3(VI) or alpha-5(VI) or alpha-6(VI). Interacts with CSPG4. Post-translationally, prolines at the third position of the tripeptide repeating unit (G-X-Y) are hydroxylated in some or all of the chains.

Its subcellular location is the secreted. It localises to the extracellular space. The protein localises to the extracellular matrix. It is found in the membrane. Its function is as follows. Collagen VI acts as a cell-binding protein. This chain is Collagen alpha-2(VI) chain (COL6A2), found in Homo sapiens (Human).